We begin with the raw amino-acid sequence, 377 residues long: N5-carboxyaminoimidazole ribonucleotide synthase (377 aa).

ATP is bound by residues Arg-93, Lys-133, 138–144 (GYDGRGQ), 175–178 (EEFV), Glu-183, His-206, and 257–258 (NE). The ATP-grasp domain maps to 97–287 (KTLLDHAGVR…QFENHLRAVC (191 aa)).

This sequence belongs to the PurK/PurT family. In terms of assembly, homodimer.

It carries out the reaction 5-amino-1-(5-phospho-beta-D-ribosyl)imidazole + hydrogencarbonate + ATP = 5-carboxyamino-1-(5-phospho-D-ribosyl)imidazole + ADP + phosphate + 2 H(+). It functions in the pathway purine metabolism; IMP biosynthesis via de novo pathway; 5-amino-1-(5-phospho-D-ribosyl)imidazole-4-carboxylate from 5-amino-1-(5-phospho-D-ribosyl)imidazole (N5-CAIR route): step 1/2. Catalyzes the ATP-dependent conversion of 5-aminoimidazole ribonucleotide (AIR) and HCO(3)(-) to N5-carboxyaminoimidazole ribonucleotide (N5-CAIR). The protein is N5-carboxyaminoimidazole ribonucleotide synthase of Vibrio vulnificus (strain YJ016).